Consider the following 185-residue polypeptide: Ribosome-recycling factor (185 aa).

A disordered region spans residues 141-160 (RIQKDGEAGEDEVGRAEKEL).

The protein belongs to the RRF family.

The protein localises to the cytoplasm. Functionally, responsible for the release of ribosomes from messenger RNA at the termination of protein biosynthesis. May increase the efficiency of translation by recycling ribosomes from one round of translation to another. The chain is Ribosome-recycling factor from Rhodococcus jostii (strain RHA1).